Here is a 612-residue protein sequence, read N- to C-terminus: Phosphoenolpyruvate carboxykinase [GTP] (612 aa).

Substrate is bound by residues arginine 82 and 221–223; that span reads YGG. Positions 230 and 250 each coordinate Mn(2+). Serine 272 contacts substrate. 273–278 provides a ligand contact to GTP; the sequence is ACGKTN. Cysteine 274 is a catalytic residue. Residue aspartate 297 coordinates Mn(2+). 388 to 390 provides a ligand contact to substrate; that stretch reads NSR. Residues arginine 390, arginine 421, and 516–519 each bind GTP; that span reads FGEN.

The protein belongs to the phosphoenolpyruvate carboxykinase [GTP] family. In terms of assembly, monomer. The cofactor is Mn(2+).

Its subcellular location is the cytoplasm. The enzyme catalyses oxaloacetate + GTP = phosphoenolpyruvate + GDP + CO2. The protein operates within carbohydrate biosynthesis; gluconeogenesis. Functionally, catalyzes the conversion of oxaloacetate (OAA) to phosphoenolpyruvate (PEP), the rate-limiting step in the metabolic pathway that produces glucose from lactate and other precursors derived from the citric acid cycle. The chain is Phosphoenolpyruvate carboxykinase [GTP] from Corynebacterium efficiens (strain DSM 44549 / YS-314 / AJ 12310 / JCM 11189 / NBRC 100395).